The chain runs to 301 residues: (R)-2-haloacid dehalogenase (301 aa).

It belongs to the HAD-like hydrolase superfamily. S-2-haloalkanoic acid dehalogenase family. In terms of assembly, homotetramer.

It catalyses the reaction an (R)-2-haloacid + H2O = a (2S)-2-hydroxycarboxylate + a halide anion + H(+). Functionally, catalyzes the hydrolytic dehalogenation of small (R)-2-haloalkanoic acids to yield the corresponding (S)-2-hydroxyalkanoic acids. Acts on acids of short chain lengths, C(2) to C(4), with inversion of configuration at C-2. This chain is (R)-2-haloacid dehalogenase (hadD), found in Pseudomonas putida (Arthrobacter siderocapsulatus).